Reading from the N-terminus, the 417-residue chain is Methyltransferase/ribosomally synthesized cyclic peptide lentinulin A precursor ledMA (417 aa).

Residues 1 to 251 are methyltransferase domain; sequence METPTLNKSG…GVSTFYIPPK (251 aa). Catalysis depends on residues arginine 72, tyrosine 76, and tyrosine 98. Positions 98, 100, 103, 130, 172, 213, 244, and 245 each coordinate S-adenosyl-L-methionine. The interval 252–378 is clasp domain; that stretch reads ERKEINVDII…WAFRCAMKEM (127 aa). The segment at 379–399 is precursor leader; it reads PISLLDNAKQSMEEASEQGFP. Isoleucine 401 bears the N-methylisoleucine mark. 2 positions are modified to N-methylvaline: valine 403 and valine 404. At glycine 405 the chain carries N-methylglycine. An N-methylvaline mark is found at valine 406 and valine 407. Glycine 408 is modified (N-methylglycine). Valine 410 carries the post-translational modification N-methylvaline. Glycine 411 is modified (N-methylglycine). Valine 413 bears the N-methylvaline mark.

This sequence in the N-terminal section; belongs to the precorrin methyltransferase family. As to quaternary structure, homodimer. LedMA automethylates at Ile-401, Val-403, Val-404, Gly-405, Val-406, Val-407, Gly-408, Val-410, Gly-411 and Val-413 before being processed by the prolyloligopeptidase ledP which likely forms a peptidyl ester upon removal of the follower propeptide, which then undergoes macrocyclization with the N-terminus of the modified core peptide. Peptide backbone alpha-N-methylations change the physicochemical properties of amide bonds to provide structural constraints and other favorable characteristics including biological membrane permeability to peptides.

The protein operates within mycotoxin biosynthesis. Its function is as follows. Fusion protein of the methyltransferase ledM and the lentinulin A core peptide; part of the gene cluster that mediates the biosynthesis of lentinulin A, a highly methylated cyclic dodecapeptide with nematodicidal activity. Lentinulin A derives from the C-terminus of the ledMA protein, and it is the ledMA protein that methylates its own C-terminus using S-adenosyl methionine (SAM). The C-terminus is subsequently cleaved off and macrocyclized by the prolyloligopeptidase ledP to give the final product. The polypeptide is Methyltransferase/ribosomally synthesized cyclic peptide lentinulin A precursor ledMA (Lentinula edodes (Shiitake mushroom)).